A 514-amino-acid chain; its full sequence is Probable type III restriction-modification enzyme HindVIP Res subunit (514 aa).

The protein belongs to the type III restriction-modification system Res protein family. As to quaternary structure, contains two different subunits: Res and Mod. Mg(2+) is required as a cofactor. It depends on S-adenosyl-L-methionine as a cofactor.

It carries out the reaction Endonucleolytic cleavage of DNA to give specific double-stranded fragments with terminal 5'-phosphates.. Its function is as follows. A type III restriction enzyme that recognizes 2 inversely oriented double-stranded sequences 5'-CGAAT-3' and cleaves 25-27 base pairs downstream. After binding to one recognition site undergoes random one-dimensional diffusion along DNA until it collides with a stationary enzyme bound to the second DNA site, which is when DNA cleavage occurs. DNA restriction requires both the Res and Mod subunits. The protein is Probable type III restriction-modification enzyme HindVIP Res subunit of Haemophilus influenzae (strain ATCC 51907 / DSM 11121 / KW20 / Rd).